The sequence spans 152 residues: Deoxyuridine 5'-triphosphate nucleotidohydrolase (152 aa).

Residues 65-67 (RSG), N78, and 82-84 (TID) each bind substrate.

This sequence belongs to the dUTPase family. The cofactor is Mg(2+).

It catalyses the reaction dUTP + H2O = dUMP + diphosphate + H(+). It participates in pyrimidine metabolism; dUMP biosynthesis; dUMP from dCTP (dUTP route): step 2/2. Functionally, this enzyme is involved in nucleotide metabolism: it produces dUMP, the immediate precursor of thymidine nucleotides and it decreases the intracellular concentration of dUTP so that uracil cannot be incorporated into DNA. This Chlorobaculum tepidum (strain ATCC 49652 / DSM 12025 / NBRC 103806 / TLS) (Chlorobium tepidum) protein is Deoxyuridine 5'-triphosphate nucleotidohydrolase.